Consider the following 457-residue polypeptide: Streptogrisin-C (457 aa).

Positions 1 to 34 form a signal peptide, tat-type signal; the sequence is MERTTLRRRALVAGTATVAVGALALAGLTGVASA. A propeptide spanning residues 35-202 is cleaved from the precursor; it reads DPAATAAPPV…ARSAEQPRAL (168 aa). The catalytic stretch occupies residues 203-393; the sequence is ADIRGGDAYY…QAYGLTLVTS (191 aa). Cysteines 219 and 239 form a disulfide. Residues histidine 238 and aspartate 266 each act as charge relay system in the active site. Intrachain disulfides connect cysteine 305/cysteine 315 and cysteine 341/cysteine 368. Serine 347 (charge relay system) is an active-site residue. The interval 393 to 412 is disordered; it reads SGGGTPTDPPTTPPTDSPGG. Residues 394 to 413 are linker; sequence GGGTPTDPPTTPPTDSPGGT. Residues 399–408 show a composition bias toward pro residues; sequence TDPPTTPPTD. The Chitin-binding type-3 domain occupies 415 to 457; that stretch reads AVGTAYAAGATVTYGGATYRCLQAHTAQPGWTPADVPALWQRV.

It belongs to the peptidase S1 family. Monomer. In terms of processing, predicted to be exported by the Tat system. The position of the signal peptide cleavage has not been experimentally proven.

Its function is as follows. Hydrolysis of proteins with specificity similar to chymotrypsin. May be specialized for the degradation of chitin-linked proteins. Has a primary specificity for large aliphatic or aromatic amino acids. The chain is Streptogrisin-C (sprC) from Streptomyces griseus.